Here is a 128-residue protein sequence, read N- to C-terminus: Nitrogen fixation nifHD region GlnB-like protein 2 (128 aa).

The protein belongs to the P(II) protein family.

Could be involved in the regulation of nitrogen fixation. The protein is Nitrogen fixation nifHD region GlnB-like protein 2 (glnBB) of Methanothermococcus thermolithotrophicus (Methanococcus thermolithotrophicus).